A 185-amino-acid polypeptide reads, in one-letter code: Orotate phosphoribosyltransferase (185 aa).

Residues Arg99, Lys100, Lys103, and 125 to 133 contribute to the 5-phospho-alpha-D-ribose 1-diphosphate site; that span reads EDVTTTGGS. 2 residues coordinate orotate: Thr129 and Arg157.

It belongs to the purine/pyrimidine phosphoribosyltransferase family. PyrE subfamily. In terms of assembly, homodimer. The cofactor is Mg(2+).

The catalysed reaction is orotidine 5'-phosphate + diphosphate = orotate + 5-phospho-alpha-D-ribose 1-diphosphate. The protein operates within pyrimidine metabolism; UMP biosynthesis via de novo pathway; UMP from orotate: step 1/2. Functionally, catalyzes the transfer of a ribosyl phosphate group from 5-phosphoribose 1-diphosphate to orotate, leading to the formation of orotidine monophosphate (OMP). The polypeptide is Orotate phosphoribosyltransferase (Methanococcus maripaludis (strain DSM 14266 / JCM 13030 / NBRC 101832 / S2 / LL)).